Here is a 431-residue protein sequence, read N- to C-terminus: Trigger factor (431 aa).

The region spanning 160–245 is the PPIase FKBP-type domain; that stretch reads EDRVTIDFSG…LKKVEVMVLP (86 aa).

Belongs to the FKBP-type PPIase family. Tig subfamily.

The protein resides in the cytoplasm. The enzyme catalyses [protein]-peptidylproline (omega=180) = [protein]-peptidylproline (omega=0). In terms of biological role, involved in protein export. Acts as a chaperone by maintaining the newly synthesized protein in an open conformation. Functions as a peptidyl-prolyl cis-trans isomerase. The chain is Trigger factor from Actinobacillus succinogenes (strain ATCC 55618 / DSM 22257 / CCUG 43843 / 130Z).